A 121-amino-acid polypeptide reads, in one-letter code: Large ribosomal subunit protein bL19 (121 aa).

Belongs to the bacterial ribosomal protein bL19 family.

In terms of biological role, this protein is located at the 30S-50S ribosomal subunit interface and may play a role in the structure and function of the aminoacyl-tRNA binding site. In Chlorobium phaeobacteroides (strain BS1), this protein is Large ribosomal subunit protein bL19.